Here is a 304-residue protein sequence, read N- to C-terminus: GTPase Era (304 aa).

One can recognise an Era-type G domain in the interval 11 to 186 (YCGFIAIVGR…LRKGVHHFPE (176 aa)). Residues 19-26 (GRPNVGKS) are G1. 19 to 26 (GRPNVGKS) is a GTP binding site. A G2 region spans residues 45–49 (QTTRH). The G3 stretch occupies residues 66-69 (DTPG). Residues 66-70 (DTPGL) and 128-131 (NKVD) contribute to the GTP site. Residues 128 to 131 (NKVD) form a G4 region. The G5 stretch occupies residues 158–160 (ISA). The KH type-2 domain occupies 210–287 (TGEELPYSVT…HLELWVKVKS (78 aa)).

Belongs to the TRAFAC class TrmE-Era-EngA-EngB-Septin-like GTPase superfamily. Era GTPase family. In terms of assembly, monomer.

The protein localises to the cytoplasm. It localises to the cell inner membrane. An essential GTPase that binds both GDP and GTP, with rapid nucleotide exchange. Plays a role in 16S rRNA processing and 30S ribosomal subunit biogenesis and possibly also in cell cycle regulation and energy metabolism. This Histophilus somni (strain 2336) (Haemophilus somnus) protein is GTPase Era.